A 336-amino-acid chain; its full sequence is Anthranilate phosphoribosyltransferase (336 aa).

Residues glycine 80, 83-84 (GD), threonine 88, 90-93 (NIST), 108-116 (KHGNRSITS), and serine 120 contribute to the 5-phospho-alpha-D-ribose 1-diphosphate site. Glycine 80 serves as a coordination point for anthranilate. Serine 92 contacts Mg(2+). Asparagine 111 serves as a coordination point for anthranilate. Arginine 166 contacts anthranilate. Aspartate 224 and glutamate 225 together coordinate Mg(2+).

Belongs to the anthranilate phosphoribosyltransferase family. Homodimer. The cofactor is Mg(2+).

The enzyme catalyses N-(5-phospho-beta-D-ribosyl)anthranilate + diphosphate = 5-phospho-alpha-D-ribose 1-diphosphate + anthranilate. The protein operates within amino-acid biosynthesis; L-tryptophan biosynthesis; L-tryptophan from chorismate: step 2/5. Catalyzes the transfer of the phosphoribosyl group of 5-phosphorylribose-1-pyrophosphate (PRPP) to anthranilate to yield N-(5'-phosphoribosyl)-anthranilate (PRA). This Caldicellulosiruptor saccharolyticus (strain ATCC 43494 / DSM 8903 / Tp8T 6331) protein is Anthranilate phosphoribosyltransferase.